The sequence spans 369 residues: Pyrimidine monooxygenase RutA (369 aa).

FMN is bound by residues 49–50, Asn-115, Glu-124, 140–141, and Ser-190; these read IK and RY.

This sequence belongs to the NtaA/SnaA/DszA monooxygenase family. RutA subfamily.

The catalysed reaction is uracil + FMNH2 + NADH + O2 = (Z)-3-ureidoacrylate + FMN + NAD(+) + H2O + H(+). It carries out the reaction thymine + FMNH2 + NADH + O2 = (Z)-2-methylureidoacrylate + FMN + NAD(+) + H2O + H(+). Its function is as follows. Catalyzes the pyrimidine ring opening between N-3 and C-4 by an unusual flavin hydroperoxide-catalyzed mechanism, adding oxygen atoms in the process to yield ureidoacrylate peracid, that immediately reacts with FMN forming ureidoacrylate and FMN-N(5)-oxide. The FMN-N(5)-oxide reacts spontaneously with NADH to produce FMN. Requires the flavin reductase RutF to regenerate FMN in vivo. The polypeptide is Pyrimidine monooxygenase RutA (Acinetobacter baylyi (strain ATCC 33305 / BD413 / ADP1)).